The primary structure comprises 209 residues: A-type ATP synthase subunit D (209 aa).

The protein belongs to the V-ATPase D subunit family. In terms of assembly, has multiple subunits with at least A(3), B(3), C, D, E, F, H, I and proteolipid K(x).

It localises to the cell membrane. Functionally, component of the A-type ATP synthase that produces ATP from ADP in the presence of a proton gradient across the membrane. The chain is A-type ATP synthase subunit D from Sulfolobus acidocaldarius (strain ATCC 33909 / DSM 639 / JCM 8929 / NBRC 15157 / NCIMB 11770).